A 61-amino-acid polypeptide reads, in one-letter code: Small ribosomal subunit protein uS14 (61 aa).

The Zn(2+) site is built by Cys24, Cys27, Cys40, and Cys43.

This sequence belongs to the universal ribosomal protein uS14 family. Zinc-binding uS14 subfamily. As to quaternary structure, part of the 30S ribosomal subunit. Contacts proteins S3 and S10. Zn(2+) serves as cofactor.

In terms of biological role, binds 16S rRNA, required for the assembly of 30S particles and may also be responsible for determining the conformation of the 16S rRNA at the A site. This is Small ribosomal subunit protein uS14 from Streptococcus mutans serotype c (strain ATCC 700610 / UA159).